The sequence spans 74 residues: Small ribosomal subunit protein eS28 (74 aa).

It belongs to the eukaryotic ribosomal protein eS28 family.

The sequence is that of Small ribosomal subunit protein eS28 from Halobacterium salinarum (strain ATCC 29341 / DSM 671 / R1).